The primary structure comprises 467 residues: 3-isopropylmalate dehydratase large subunit (467 aa).

The [4Fe-4S] cluster site is built by C347, C407, and C410.

It belongs to the aconitase/IPM isomerase family. LeuC type 1 subfamily. In terms of assembly, heterodimer of LeuC and LeuD. [4Fe-4S] cluster is required as a cofactor.

The catalysed reaction is (2R,3S)-3-isopropylmalate = (2S)-2-isopropylmalate. It participates in amino-acid biosynthesis; L-leucine biosynthesis; L-leucine from 3-methyl-2-oxobutanoate: step 2/4. Catalyzes the isomerization between 2-isopropylmalate and 3-isopropylmalate, via the formation of 2-isopropylmaleate. The sequence is that of 3-isopropylmalate dehydratase large subunit from Pelagibacter ubique (strain HTCC1062).